Here is a 294-residue protein sequence, read N- to C-terminus: NAD kinase (294 aa).

Asp74 (proton acceptor) is an active-site residue. NAD(+)-binding positions include 74 to 75 (DG), 148 to 149 (NE), His159, Arg176, Asp178, and 189 to 194 (TAYSLS).

Belongs to the NAD kinase family. It depends on a divalent metal cation as a cofactor.

Its subcellular location is the cytoplasm. It carries out the reaction NAD(+) + ATP = ADP + NADP(+) + H(+). Its function is as follows. Involved in the regulation of the intracellular balance of NAD and NADP, and is a key enzyme in the biosynthesis of NADP. Catalyzes specifically the phosphorylation on 2'-hydroxyl of the adenosine moiety of NAD to yield NADP. In Pseudoalteromonas translucida (strain TAC 125), this protein is NAD kinase.